Here is an 89-residue protein sequence, read N- to C-terminus: Small ribosomal subunit protein uS14 (89 aa).

This sequence belongs to the universal ribosomal protein uS14 family. Part of the 30S ribosomal subunit. Contacts proteins S3 and S10.

Binds 16S rRNA, required for the assembly of 30S particles and may also be responsible for determining the conformation of the 16S rRNA at the A site. The protein is Small ribosomal subunit protein uS14 of Amoebophilus asiaticus (strain 5a2).